The chain runs to 293 residues: MIFPLLLTLILPNFVAPKVLEPEKDDEIAVSTQREKTFFDMKLILTKLPTFEPSKYGHINIPLRKKRGIALHPLQWASYLWPNAEVPYDIATHYTSTEKSIILSAMEAFKNVTCVRFRPRAATDKHYLQINKYFNVERCFSYIGRQSSRTLFGTPEGNVETRMRLDPACLRGNGRGIVMHELMHILGFYHEHQRDDRDRRIVGSAVHYNFKIYRRAKTLYMGAYDANSIMHYNFQNLPWQRRDHFSTSDIININTFYKCKNLLSSKLAPKVPISPTSTSTTAITTTNTTTTKL.

An N-terminal signal peptide occupies residues 1–17; sequence MIFPLLLTLILPNFVAP. The propeptide occupies 18–67; sequence KVLEPEKDDEIAVSTQREKTFFDMKLILTKLPTFEPSKYGHINIPLRKKR. Positions 67 to 260 constitute a Peptidase M12A domain; sequence RGIALHPLQW…ININTFYKCK (194 aa). A glycan (N-linked (GlcNAc...) asparagine) is linked at asparagine 111. Disulfide bonds link cysteine 114/cysteine 259 and cysteine 139/cysteine 169. Histidine 180 lines the Zn(2+) pocket. The active site involves glutamate 181. Residues histidine 184 and histidine 190 each coordinate Zn(2+). N-linked (GlcNAc...) asparagine glycosylation is present at asparagine 287.

The cofactor is Zn(2+).

It localises to the secreted. Functionally, metalloprotease. The protein is Zinc metalloproteinase nas-2 (nas-2) of Caenorhabditis elegans.